The following is a 487-amino-acid chain: ESCRT-I complex subunit vps23 (487 aa).

Residues 428–487 (SERELKYYELKRKDEKLDEGIRALNQALHHESIMPASWLKGIKLLARQQFLIRDEMLQYS) enclose the SB domain.

As to quaternary structure, component of the ESCRT-I complex (endosomal sorting complex required for transport I).

Its subcellular location is the cytoplasm. The protein localises to the endosome. It is found in the late endosome membrane. Functionally, component of the ESCRT-I complex, a regulator of vesicular trafficking process. Binds to ubiquitinated cargo proteins and is required for the sorting of endocytic ubiquitinated cargos into multivesicular bodies (MVBs). Mediates the association to the ESCRT-0 complex. The chain is ESCRT-I complex subunit vps23 (sst6) from Schizosaccharomyces pombe (strain 972 / ATCC 24843) (Fission yeast).